A 1234-amino-acid chain; its full sequence is Complement factor H (1234 aa).

Positions 1–18 (MRLSARIIWLILWTVCAA) are cleaved as a signal peptide. Sushi domains lie at 19-82 (EDCK…ICRK), 83-143 (KPCG…LCEV), 144-207 (VKCL…RCVE), 208-264 (ILCT…FCEE), 265-322 (KRCS…RCTL), 324-386 (PCEF…VPCV), 387-444 (RKCV…KCIR), 446-507 (KTCS…SCIK), 508-566 (SCDM…SCYE), 567-624 (RECS…TCKG), 627-685 (ASCA…VCIE), 688-745 (RTCG…KCVA), 750-804 (EKCR…NCTS), 806-863 (TSCP…RCIE), 865-933 (IPCS…RCVG), 934-991 (LPCG…KCIK), 992-1050 (TDCD…VCKD), 1051-1109 (NSCV…KCRD), 1112-1170 (GKCG…TCLH), and 1171-1234 (ACVI…PTCV). 40 disulfides stabilise this stretch: Cys21–Cys66, Cys52–Cys80, Cys85–Cys129, Cys114–Cys141, Cys146–Cys192, Cys178–Cys205, Cys210–Cys251, Cys237–Cys262, Cys267–Cys309, Cys294–Cys320, Cys325–Cys374, Cys357–Cys385, Cys389–Cys431, Cys416–Cys442, Cys448–Cys494, Cys477–Cys505, Cys509–Cys553, Cys536–Cys564, Cys569–Cys610, Cys597–Cys622, Cys629–Cys672, Cys658–Cys683, Cys690–Cys732, Cys718–Cys743, Cys752–Cys791, Cys780–Cys802, Cys808–Cys850, Cys836–Cys861, Cys867–Cys920, Cys906–Cys931, Cys936–Cys978, Cys964–Cys989, Cys994–Cys1037, Cys1023–Cys1048, Cys1053–Cys1096, Cys1082–Cys1107, Cys1114–Cys1157, Cys1143–Cys1168, Cys1172–Cys1223, and Cys1206–Cys1233. N-linked (GlcNAc...) asparagine glycosylation is found at Asn676, Asn721, Asn773, and Asn801. The disordered stretch occupies residues 872–896 (TIEHGSINLPRSSEERRDSIESSSH). Residues 883–896 (SSEERRDSIESSSH) show a composition bias toward basic and acidic residues. 2 N-linked (GlcNAc...) asparagine glycosylation sites follow: Asn1030 and Asn1061. Ser1198 is modified (phosphoserine). Asn1225 is a glycosylation site (N-linked (GlcNAc...) asparagine).

Homodimer. Also forms homooligomers. Interacts with complement protein C3b; this interaction inhibits complement activation. Interacts with complement protein C3d. Interacts with CR3/ITGAM; this interaction mediates adhesion of neutrophils to pathogens leading to pathogen clearance. In terms of processing, sulfated on tyrosine residues. In terms of tissue distribution, CFH is one of the most abundant complement components in blood where the liver is the major source of CFH protein in vivo. in addition, CFH is secreted by additional cell types including monocytes, fibroblasts, or endothelial cells.

Its subcellular location is the secreted. Functionally, glycoprotein that plays an essential role in maintaining a well-balanced immune response by modulating complement activation. Acts as a soluble inhibitor of complement, where its binding to self markers such as glycan structures prevents complement activation and amplification on cell surfaces. Accelerates the decay of the complement alternative pathway (AP) C3 convertase C3bBb, thus preventing local formation of more C3b, the central player of the complement amplification loop. As a cofactor of the serine protease factor I, CFH also regulates proteolytic degradation of already-deposited C3b. In addition, mediates several cellular responses through interaction with specific receptors. For example, interacts with CR3/ITGAM receptor and thereby mediates the adhesion of human neutrophils to different pathogens. In turn, these pathogens are phagocytosed and destroyed. The sequence is that of Complement factor H (Cfh) from Mus musculus (Mouse).